Reading from the N-terminus, the 489-residue chain is Tyrosine-protein phosphatase MSG5 (489 aa).

Positions 1–18 (MQFHSDKQHLDSKTDIDF) are enriched in basic and acidic residues. The tract at residues 1–30 (MQFHSDKQHLDSKTDIDFKPNSPRSLQNRN) is disordered. 3 positions are modified to phosphoserine: S22, S98, and S151. T178 is modified (phosphothreonine). One can recognise a Tyrosine-protein phosphatase domain in the interval 233-375 (GPLLVLPPNL…LMEWGTMLSK (143 aa)). Catalysis depends on C319, which acts as the Phosphocysteine intermediate. 2 disordered regions span residues 375–401 (KNSPGEEGETVHMPEEDDIGNNEVSST) and 419–489 (LSSS…MFLP). A compositionally biased stretch (low complexity) spans 419 to 450 (LSSSPNDSSVNSSEVTPRTPATLTGARTALAT). Residues 451–460 (ERGEDDEHCK) show a composition bias toward basic and acidic residues.

This sequence belongs to the protein-tyrosine phosphatase family. Non-receptor class dual specificity subfamily.

The enzyme catalyses O-phospho-L-tyrosyl-[protein] + H2O = L-tyrosyl-[protein] + phosphate. Dual specificity phosphatase that dephosphorylates MAP kinase FUS3 on both a Tyr and a Ser or Thr. Has a role in adaptation to pheromone. This chain is Tyrosine-protein phosphatase MSG5 (MSG5), found in Saccharomyces cerevisiae (strain ATCC 204508 / S288c) (Baker's yeast).